A 344-amino-acid polypeptide reads, in one-letter code: Methionine import ATP-binding protein MetN 1 (344 aa).

The region spanning 2 to 241 (IELRNLSQRF…PHHEVTRALI (240 aa)) is the ABC transporter domain. Residue 38–45 (GRSGAGKS) participates in ATP binding.

This sequence belongs to the ABC transporter superfamily. Methionine importer (TC 3.A.1.24) family. In terms of assembly, the complex is composed of two ATP-binding proteins (MetN), two transmembrane proteins (MetI) and a solute-binding protein (MetQ).

Its subcellular location is the cell inner membrane. It catalyses the reaction L-methionine(out) + ATP + H2O = L-methionine(in) + ADP + phosphate + H(+). The catalysed reaction is D-methionine(out) + ATP + H2O = D-methionine(in) + ADP + phosphate + H(+). In terms of biological role, part of the ABC transporter complex MetNIQ involved in methionine import. Responsible for energy coupling to the transport system. The chain is Methionine import ATP-binding protein MetN 1 from Burkholderia ambifaria (strain ATCC BAA-244 / DSM 16087 / CCUG 44356 / LMG 19182 / AMMD) (Burkholderia cepacia (strain AMMD)).